A 560-amino-acid chain; its full sequence is Trans-activating transcriptional regulatory protein (560 aa).

Disordered stretches follow at residues 1–25 (MPKN…LFNN) and 99–134 (TGAE…LVNK).

It belongs to the nucleopolyhedrovirus IE-1 protein family.

Regulatory transcriptional protein, which trans-activates gene expression from early baculovirus promoters. Can also trans-activate its own promoter, suggesting that it is autoregulated during normal infection of insect cells. In Orgyia pseudotsugata (Douglas-fir tussock moth), this protein is Trans-activating transcriptional regulatory protein (IE1).